The chain runs to 559 residues: MVKSDIEIAQAAEELPITDVAAKLGLTSQDLEPYGYDKAKVNWQAIKRSEENGHLGKLILVTSISPTPAGEGKSTMTIGIGDAINNQLGKKTVIALREPSMGPVFGMKGGAAGGGYAQVIPMEDINLHFTGDMHALTSAIDNLSALVDNYIYQGNELGLDPEKIVIKRGLDVNDRTLRKVTIGQGSKFNGVERPASFQLTVGHELMAILCLSKDIADLKERIGKVLVGYTYEDEPVFVKDLGFQGAIAALLSTALKPNLVQTLEHTPAFVHGGPFANIAHGNNSILSTNLALHLSDYVLSEAGFGSDLGGQKFLDFVSTKLEKKPDAAVVVATVRALKYQAEKSTDHLKEENLDSLKEGFANLDRHMNNVRSYNIPVLVVINKFPTDTEAELDLLKSLIEEQGFPCEIVTAHDEGSKGAKAAAEKIVELADKSDYEIKRSYDLDDDLETKIEKVAKRIYHAADVEYTDKAKDQLVKLKKMGKDKLPVIIAKTQYSFTDNVKELGAPTGFTLHVKGLSLRNGAGFVVVSTGHILDMPGLPKHPAALDIDVDETGKISGLF.

Threonine 67–serine 74 provides a ligand contact to ATP.

The protein belongs to the formate--tetrahydrofolate ligase family.

It carries out the reaction (6S)-5,6,7,8-tetrahydrofolate + formate + ATP = (6R)-10-formyltetrahydrofolate + ADP + phosphate. Its pathway is one-carbon metabolism; tetrahydrofolate interconversion. In Lactobacillus delbrueckii subsp. bulgaricus (strain ATCC 11842 / DSM 20081 / BCRC 10696 / JCM 1002 / NBRC 13953 / NCIMB 11778 / NCTC 12712 / WDCM 00102 / Lb 14), this protein is Formate--tetrahydrofolate ligase.